The sequence spans 1080 residues: Zorya protein ZorD (1080 aa).

Residues 596–779 enclose the Helicase ATP-binding domain; it reads LRSPEETAGC…WSLFDFAQPG (184 aa). The Helicase C-terminal domain occupies 904 to 1069; that stretch reads KLNWLLKILA…DMLCATPDLS (166 aa).

In terms of biological role, component of antiviral defense system Zorya type I, composed of ZorA, ZorB, ZorC and ZorD. Expression of Zorya type I in E.coli (strain MG1655) confers 10,000-fold resistance to phage SECphi27, 100-fold resistance to lambda, and 10-fold resistance to T7. While most T7 infected Zorya-containing cells undergo abortive infection, a minority produce viable phage progeny. These eventually accumulate to a high multiplicity of infection, leading to culture collapse by 2 hours after initial infection. ZorA and ZorB probably assemble in the cell inner membrane and exert their effect there. This may have ATPase activity. This Escherichia coli O139:H28 (strain E24377A / ETEC) protein is Zorya protein ZorD.